An 840-amino-acid polypeptide reads, in one-letter code: DNA mismatch repair protein MutS (840 aa).

601–608 (GPNMSGKS) provides a ligand contact to ATP.

It belongs to the DNA mismatch repair MutS family.

In terms of biological role, this protein is involved in the repair of mismatches in DNA. It is possible that it carries out the mismatch recognition step. This protein has a weak ATPase activity. This Lactococcus lactis subsp. cremoris (strain SK11) protein is DNA mismatch repair protein MutS.